Reading from the N-terminus, the 257-residue chain is Global transcriptional regulator CodY (257 aa).

The segment at 1 to 155 is GAF domain; the sequence is MSLLSKTREL…AATVIGMEIL (155 aa). A DNA-binding region (H-T-H motif) is located at residues 203–222; sequence ASKVADRVGITRSVIVNALR.

This sequence belongs to the CodY family.

Its subcellular location is the cytoplasm. Its function is as follows. DNA-binding global transcriptional regulator which is involved in the adaptive response to starvation and acts by directly or indirectly controlling the expression of numerous genes in response to nutrient availability. During rapid exponential growth, CodY is highly active and represses genes whose products allow adaptation to nutrient depletion. This chain is Global transcriptional regulator CodY, found in Staphylococcus haemolyticus (strain JCSC1435).